The sequence spans 1066 residues: Hemoglobin and hemoglobin-haptoglobin-binding protein C (1066 aa).

The first 24 residues, 1 to 24 (MTNFKFTLLARSIAFALNASTAYA), serve as a signal peptide directing secretion. 7 repeat units span residues 26-29 (QPTN), 30-33 (QPTN), 34-37 (QPTN), 38-41 (QPTN), 42-45 (QPTN), 46-49 (QPTN), and 50-53 (QPTN). The segment at 26 to 53 (QPTNQPTNQPTNQPTNQPTNQPTNQPTN) is 7 X 4 AA tandem repeats of Q-P-T-N. Low complexity predominate over residues 26-54 (QPTNQPTNQPTNQPTNQPTNQPTNQPTNQ). Residues 26 to 57 (QPTNQPTNQPTNQPTNQPTNQPTNQPTNQDSN) form a disordered region. Residues 63-70 (EQINVSGS) carry the TonB box motif. The region spanning 66–200 (NVSGSTETIN…LGGSVIFETK (135 aa)) is the TBDR plug domain. One can recognise a TBDR beta-barrel domain in the interval 208–1066 (DKDYYVSYKR…NYRMSVQFEF (859 aa)). The TonB C-terminal box motif lies at 1049–1066 (NRLYAPGRNYRMSVQFEF).

This sequence belongs to the TonB-dependent receptor family. Hemoglobin/haptoglobin binding protein subfamily.

The protein resides in the cell outer membrane. Functionally, acts as a receptor for hemoglobin or the hemoglobin/haptoglobin complex of the human host and is required for heme uptake. The protein is Hemoglobin and hemoglobin-haptoglobin-binding protein C (hgpC) of Haemophilus influenzae.